The sequence spans 96 residues: Co-chaperonin GroES (96 aa).

This sequence belongs to the GroES chaperonin family. Heptamer of 7 subunits arranged in a ring. Interacts with the chaperonin GroEL.

It localises to the cytoplasm. In terms of biological role, together with the chaperonin GroEL, plays an essential role in assisting protein folding. The GroEL-GroES system forms a nano-cage that allows encapsulation of the non-native substrate proteins and provides a physical environment optimized to promote and accelerate protein folding. GroES binds to the apical surface of the GroEL ring, thereby capping the opening of the GroEL channel. The polypeptide is Co-chaperonin GroES (Shewanella oneidensis (strain ATCC 700550 / JCM 31522 / CIP 106686 / LMG 19005 / NCIMB 14063 / MR-1)).